The sequence spans 155 residues: Small ribosomal subunit protein uS7cz/uS7cy (155 aa).

The protein belongs to the universal ribosomal protein uS7 family. As to quaternary structure, part of the 30S ribosomal subunit.

The protein resides in the plastid. It is found in the chloroplast. One of the primary rRNA binding proteins, it binds directly to 16S rRNA where it nucleates assembly of the head domain of the 30S subunit. The protein is Small ribosomal subunit protein uS7cz/uS7cy (rps7-A) of Lactuca sativa (Garden lettuce).